A 452-amino-acid chain; its full sequence is Probable pectate lyase 9 (452 aa).

A signal peptide spans 1–25; sequence MATSSLKLTSACFVLLFIFVGCVLT. N-linked (GlcNAc...) asparagine glycosylation is found at Asn-88, Asn-139, Asn-214, and Asn-233. Asp-250 provides a ligand contact to Ca(2+). N-linked (GlcNAc...) asparagine glycosylation occurs at Asn-271. Asp-274 and Asp-278 together coordinate Ca(2+). Asn-281 and Asn-305 each carry an N-linked (GlcNAc...) asparagine glycan. Arg-330 is an active-site residue. Asn-374 is a glycosylation site (N-linked (GlcNAc...) asparagine).

This sequence belongs to the polysaccharide lyase 1 family. Ca(2+) serves as cofactor.

It carries out the reaction Eliminative cleavage of (1-&gt;4)-alpha-D-galacturonan to give oligosaccharides with 4-deoxy-alpha-D-galact-4-enuronosyl groups at their non-reducing ends.. The protein operates within glycan metabolism; pectin degradation; 2-dehydro-3-deoxy-D-gluconate from pectin: step 2/5. The protein is Probable pectate lyase 9 of Arabidopsis thaliana (Mouse-ear cress).